We begin with the raw amino-acid sequence, 495 residues long: Protein YhjJ (495 aa).

The first 24 residues, 1–24 (MQGTKIRLLAGSLLMLASAGYVQA), serve as a signal peptide directing secretion.

The protein belongs to the peptidase M16 family.

Its subcellular location is the periplasm. This Salmonella typhi protein is Protein YhjJ (yhjJ).